A 110-amino-acid polypeptide reads, in one-letter code: Large ribosomal subunit protein uL22 (110 aa).

It belongs to the universal ribosomal protein uL22 family. As to quaternary structure, part of the 50S ribosomal subunit.

This protein binds specifically to 23S rRNA; its binding is stimulated by other ribosomal proteins, e.g. L4, L17, and L20. It is important during the early stages of 50S assembly. It makes multiple contacts with different domains of the 23S rRNA in the assembled 50S subunit and ribosome. Functionally, the globular domain of the protein is located near the polypeptide exit tunnel on the outside of the subunit, while an extended beta-hairpin is found that lines the wall of the exit tunnel in the center of the 70S ribosome. This chain is Large ribosomal subunit protein uL22, found in Desulfotalea psychrophila (strain LSv54 / DSM 12343).